A 287-amino-acid chain; its full sequence is Nucleotide-binding protein Gbem_0872 (287 aa).

ATP is bound at residue 8 to 15 (GLSGSGKS). Position 59-62 (59-62 (DIRS)) interacts with GTP.

It belongs to the RapZ-like family.

Displays ATPase and GTPase activities. In Citrifermentans bemidjiense (strain ATCC BAA-1014 / DSM 16622 / JCM 12645 / Bem) (Geobacter bemidjiensis), this protein is Nucleotide-binding protein Gbem_0872.